The chain runs to 534 residues: Peptide chain release factor 3 (534 aa).

The 270-residue stretch at 9–278 folds into the tr-type G domain; it reads SRRRTFAIIS…FFVEHAPSPQ (270 aa). GTP-binding positions include 18–25, 86–90, and 140–143; these read SHPDAGKT, DTPGH, and NKLD.

Belongs to the TRAFAC class translation factor GTPase superfamily. Classic translation factor GTPase family. PrfC subfamily.

It is found in the cytoplasm. Its function is as follows. Increases the formation of ribosomal termination complexes and stimulates activities of RF-1 and RF-2. It binds guanine nucleotides and has strong preference for UGA stop codons. It may interact directly with the ribosome. The stimulation of RF-1 and RF-2 is significantly reduced by GTP and GDP, but not by GMP. The sequence is that of Peptide chain release factor 3 from Stenotrophomonas maltophilia (strain K279a).